Here is a 337-residue protein sequence, read N- to C-terminus: Junctional sarcoplasmic reticulum protein 1 (337 aa).

The interval 1–84 (MATRAMEELD…EKEPVSKVTS (84 aa)) is mediates interaction with CACNA1S. Disordered stretches follow at residues 23–125 (SALA…ELPW) and 159–337 (EAPA…KGRD). Composition is skewed to basic and acidic residues over residues 49 to 59 (SRSHDSQERVT) and 69 to 79 (TKPKKMEKEPV). The segment covering 165 to 180 (PESWASSSSSPKGPAS) has biased composition (low complexity). The segment covering 199–213 (SKLEERVQIPRSEEA) has biased composition (basic and acidic residues). The span at 214-225 (AEKDEWESEEAA) shows a compositional bias: acidic residues. 3 stretches are compositionally biased toward basic and acidic residues: residues 236–277 (GPKE…RGAR), 285–309 (RRWEAREGGHRPWGRDSGAPEDRKR), and 316–325 (RRPDEEDRPL). Basic residues predominate over residues 326–337 (GRQKRRAGKGRD).

Interacts with CACNA1S, CACNB1 and calsequestrin.

The protein localises to the sarcoplasmic reticulum membrane. Its subcellular location is the endoplasmic reticulum membrane. In terms of biological role, involved in skeletal muscle excitation/contraction coupling (EC), probably acting as a regulator of the voltage-sensitive calcium channel CACNA1S. EC is a physiological process whereby an electrical signal (depolarization of the plasma membrane) is converted into a chemical signal, a calcium gradient, by the opening of ryanodine receptor calcium release channels. May regulate CACNA1S membrane targeting and activity. This chain is Junctional sarcoplasmic reticulum protein 1 (JSRP1), found in Bos taurus (Bovine).